Reading from the N-terminus, the 78-residue chain is Acyl carrier protein (78 aa).

The region spanning S2–V77 is the Carrier domain. Residue S37 is modified to O-(pantetheine 4'-phosphoryl)serine.

This sequence belongs to the acyl carrier protein (ACP) family. Post-translationally, 4'-phosphopantetheine is transferred from CoA to a specific serine of apo-ACP by AcpS. This modification is essential for activity because fatty acids are bound in thioester linkage to the sulfhydryl of the prosthetic group.

Its subcellular location is the cytoplasm. It functions in the pathway lipid metabolism; fatty acid biosynthesis. Functionally, carrier of the growing fatty acid chain in fatty acid biosynthesis. In Maricaulis maris (strain MCS10) (Caulobacter maris), this protein is Acyl carrier protein.